The sequence spans 1176 residues: DNA-directed RNA polymerase subunit beta (1176 aa).

A compositionally biased stretch (polar residues) spans 13–30 (TDASLHQGRPQSSSNSSV). Residues 13 to 35 (TDASLHQGRPQSSSNSSVPGAPN) are disordered.

It belongs to the RNA polymerase beta chain family. In terms of assembly, the RNAP catalytic core consists of 2 alpha, 1 beta, 1 beta' and 1 omega subunit. When a sigma factor is associated with the core the holoenzyme is formed, which can initiate transcription.

It catalyses the reaction RNA(n) + a ribonucleoside 5'-triphosphate = RNA(n+1) + diphosphate. Functionally, DNA-dependent RNA polymerase catalyzes the transcription of DNA into RNA using the four ribonucleoside triphosphates as substrates. The chain is DNA-directed RNA polymerase subunit beta from Mycobacterium ulcerans (strain Agy99).